Consider the following 390-residue polypeptide: Probable tRNA pseudouridine synthase D 2 (390 aa).

Aspartate 93 (nucleophile) is an active-site residue. One can recognise a TRUD domain in the interval 166-353 (YVLNYYGIQR…YGTRRKMVTP (188 aa)).

This sequence belongs to the pseudouridine synthase TruD family.

The enzyme catalyses uridine(13) in tRNA = pseudouridine(13) in tRNA. Functionally, could be responsible for synthesis of pseudouridine from uracil-13 in transfer RNAs. This chain is Probable tRNA pseudouridine synthase D 2, found in Methanococcus maripaludis (strain DSM 14266 / JCM 13030 / NBRC 101832 / S2 / LL).